The sequence spans 416 residues: UDP-N-acetylglucosamine 1-carboxyvinyltransferase (416 aa).

22–23 (KN) is a binding site for phosphoenolpyruvate. R91 contributes to the UDP-N-acetyl-alpha-D-glucosamine binding site. Residue C115 is the Proton donor of the active site. At C115 the chain carries 2-(S-cysteinyl)pyruvic acid O-phosphothioketal. Residues 120–124 (RPIDL), D305, and I327 each bind UDP-N-acetyl-alpha-D-glucosamine.

The protein belongs to the EPSP synthase family. MurA subfamily.

Its subcellular location is the cytoplasm. The catalysed reaction is phosphoenolpyruvate + UDP-N-acetyl-alpha-D-glucosamine = UDP-N-acetyl-3-O-(1-carboxyvinyl)-alpha-D-glucosamine + phosphate. It participates in cell wall biogenesis; peptidoglycan biosynthesis. Its function is as follows. Cell wall formation. Adds enolpyruvyl to UDP-N-acetylglucosamine. The sequence is that of UDP-N-acetylglucosamine 1-carboxyvinyltransferase from Buchnera aphidicola subsp. Acyrthosiphon pisum (strain APS) (Acyrthosiphon pisum symbiotic bacterium).